The primary structure comprises 528 residues: Phosphoenolpyruvate carboxykinase (ATP) (528 aa).

Substrate contacts are provided by Arg-56, Tyr-192, and Lys-198. Residues Lys-198, His-217, and Gly-233 to Thr-241 each bind ATP. Positions 198 and 217 each coordinate Mn(2+). Asp-254 serves as a coordination point for Mn(2+). Positions 282, 319, and 444 each coordinate ATP. Position 319 (Arg-319) interacts with substrate.

This sequence belongs to the phosphoenolpyruvate carboxykinase (ATP) family. It depends on Mn(2+) as a cofactor.

It is found in the cytoplasm. The enzyme catalyses oxaloacetate + ATP = phosphoenolpyruvate + ADP + CO2. The protein operates within carbohydrate biosynthesis; gluconeogenesis. Involved in the gluconeogenesis. Catalyzes the conversion of oxaloacetate (OAA) to phosphoenolpyruvate (PEP) through direct phosphoryl transfer between the nucleoside triphosphate and OAA. The chain is Phosphoenolpyruvate carboxykinase (ATP) from Bacillus cereus (strain ATCC 10987 / NRS 248).